The primary structure comprises 430 residues: Cell wall protein ECM33 (430 aa).

The signal sequence occupies residues 1 to 19 (MQFKNALTATAILSASALA). Residues asparagine 22, asparagine 57, asparagine 83, asparagine 197, asparagine 210, asparagine 228, asparagine 235, asparagine 242, asparagine 268, asparagine 280, asparagine 305, and asparagine 329 are each glycosylated (N-linked (GlcNAc...) asparagine). Phosphoserine is present on serine 340. Residues 362-402 (LSSTSTESSKSSATSSASSSGDASNAQASVSASASSSSSSS) are compositionally biased toward low complexity. Residues 362–411 (LSSTSTESSKSSATSSASSSGDASNAQASVSASASSSSSSSKKSKGAAPE) are disordered. Glycine 407 is lipidated: GPI-anchor amidated glycine. The propeptide at 408 to 430 (AAPELVPATSFMGVVAAVAVALL) is removed in mature form.

This sequence belongs to the SPS2 family. The GPI-anchor is attached to the protein in the endoplasmic reticulum and serves to target the protein to the cell surface. There, the glucosamine-inositol phospholipid moiety is cleaved off and the GPI-modified mannoprotein is covalently attached via its lipidless GPI glycan remnant to the 1,6-beta-glucan of the outer cell wall layer.

The protein resides in the cell membrane. It localises to the secreted. The protein localises to the cell wall. Its function is as follows. Required for proper cell wall integrity and for the correct assembly of the mannoprotein outer layer of the cell wall. Important for apical bud growth. The protein is Cell wall protein ECM33 (ECM33) of Saccharomyces cerevisiae (strain JAY291) (Baker's yeast).